A 541-amino-acid polypeptide reads, in one-letter code: Protein wntless homolog (541 aa).

At 1-15 (MAGAIIENMSTKKLC) the chain is on the cytoplasmic side. Residues 16–36 (IVGGILLVFQIVAFLVGGLIA) form a helical membrane-spanning segment. Topologically, residues 37-232 (PAPTTAVSYV…GIHQNGGFTK (196 aa)) are lumenal. The tract at residues 101–202 (MEMSPWFQFM…KYYLLNIRLP (102 aa)) is interaction with Wnt proteins. Residues 233–253 (VWFAMKTFLTPSIFIIMVWYW) form a helical membrane-spanning segment. Over 254 to 268 (RRITMMSRPPVLLEK) the chain is Cytoplasmic. The helical transmembrane segment at 269-289 (VIFALGISMTFINIPVEWFSI) threads the bilayer. The Lumenal segment spans residues 290-303 (GFDWTWMLLFGDIR). Residues 304–324 (QGIFYAMLLSFWIIFCGEHMM) form a helical membrane-spanning segment. Topologically, residues 325–331 (DQHERNH) are cytoplasmic. The chain crosses the membrane as a helical span at residues 332–352 (IAGYWKQVGPIAVGSFCLFIF). At 353–380 (DMCERGVQLTNPFYSIWTTDVGTELAMA) the chain is on the lumenal side. A helical transmembrane segment spans residues 381–401 (FIIVAGICLCLYFLFLCFMVF). Residues 402–431 (QVFRNISGKQSSLPAMSKVRRLHYEGLIFR) are Cytoplasmic-facing. The chain crosses the membrane as a helical span at residues 432-452 (FKFLMLITLACAAMTVIFFIV). Residues 453–471 (SQVTEGHWKWGGVTVQVSS) are Lumenal-facing. The helical transmembrane segment at 472-492 (AFFTGIYGMWNLYVFALMFLY) threads the bilayer. Residues 493–541 (APSHKNYGEDQSNGDLGVHSGEELQLTTTITHVDGPTEIYKLTRKEAQE) are Cytoplasmic-facing.

This sequence belongs to the wntless family. In terms of assembly, interacts with WNT3A. Interacts with WNT1, WNT3 and WNT5A. N-glycosylated. Expressed in the brain, skeletal muscle, heart muscle, lung, gut, liver, and kidney (at protein level). In the brain, expressed in the cortex, striatum, ventral tegmentum, nucleus accumbens and to a lesser extent in the Purkinjie cells in the cerebellum. Expressed in eye iridocorneal angle.

It localises to the golgi apparatus membrane. Its subcellular location is the cytoplasmic vesicle membrane. The protein localises to the cell membrane. It is found in the endoplasmic reticulum membrane. The protein resides in the early endosome membrane. In terms of biological role, regulates Wnt proteins sorting and secretion in a feedback regulatory mechanism. This reciprocal interaction plays a key role in the regulation of expression, subcellular location, binding and organelle-specific association of Wnt proteins. Also plays an important role in establishment of the anterior-posterior body axis formation during development. The sequence is that of Protein wntless homolog (Wls) from Rattus norvegicus (Rat).